A 339-amino-acid polypeptide reads, in one-letter code: GTPase Obg (339 aa).

The Obg domain maps to 1–159; it reads MKFLDQAKVY…RALWLRLKLI (159 aa). Positions 160 to 327 constitute an OBG-type G domain; the sequence is ADGGIIGLPN…VLRSVAHVIE (168 aa). GTP contacts are provided by residues 166-173, 191-195, 212-215, 279-282, and 308-310; these read GLPNAGKS, FTTLY, DIPG, SQVD, and SAV. Residues S173 and T193 each contribute to the Mg(2+) site.

The protein belongs to the TRAFAC class OBG-HflX-like GTPase superfamily. OBG GTPase family. Monomer. Mg(2+) is required as a cofactor.

The protein localises to the cytoplasm. In terms of biological role, an essential GTPase which binds GTP, GDP and possibly (p)ppGpp with moderate affinity, with high nucleotide exchange rates and a fairly low GTP hydrolysis rate. Plays a role in control of the cell cycle, stress response, ribosome biogenesis and in those bacteria that undergo differentiation, in morphogenesis control. This Bartonella bacilliformis (strain ATCC 35685 / KC583 / Herrer 020/F12,63) protein is GTPase Obg.